The primary structure comprises 543 residues: Probable protein kinase UbiB (543 aa).

A Protein kinase domain is found at 123-501 (DFDQQALASA…RVRQGQSRYL (379 aa)). Residues 129 to 137 (LASASIAQV) and K152 each bind ATP. D287 functions as the Proton acceptor in the catalytic mechanism. The next 2 helical transmembrane spans lie at 498–518 (SRYLFGVGATLLVSGTILLSG) and 519–539 (DVEVFPAWLIAAGIVSWVIGW).

The protein belongs to the ABC1 family. UbiB subfamily.

Its subcellular location is the cell inner membrane. Its pathway is cofactor biosynthesis; ubiquinone biosynthesis [regulation]. Its function is as follows. Is probably a protein kinase regulator of UbiI activity which is involved in aerobic coenzyme Q (ubiquinone) biosynthesis. In Serratia proteamaculans (strain 568), this protein is Probable protein kinase UbiB.